A 75-amino-acid chain; its full sequence is MKNVRKIFTAIIEYDPEKKQYVGMVPDVPGVHTVGSSLEEVRRNLKEVLELVLEEAGDEINLQEFVALEMIEVET.

Belongs to the UPF0150 family.

This chain is UPF0150 protein TM_1313, found in Thermotoga maritima (strain ATCC 43589 / DSM 3109 / JCM 10099 / NBRC 100826 / MSB8).